A 189-amino-acid polypeptide reads, in one-letter code: Apolipoprotein D (189 aa).

Positions 1–20 (MGMMLLLLSMLAGLVAEAEG) are cleaved as a signal peptide. A Pyrrolidone carboxylic acid modification is found at Gln21. Intrachain disulfides connect Cys28-Cys134 and Cys61-Cys185. 2 N-linked (GlcNAc...) asparagine glycosylation sites follow: Asn65 and Asn98.

The protein belongs to the calycin superfamily. Lipocalin family. Homodimer.

It is found in the secreted. Functionally, APOD occurs in the macromolecular complex with lecithin-transport and binding of bilin. Appears to be able to transport a variety of ligands in a number of different contexts. The polypeptide is Apolipoprotein D (APOD) (Cavia porcellus (Guinea pig)).